A 115-amino-acid polypeptide reads, in one-letter code: Histidine-rich carboxyl terminus protein 1 (115 aa).

A helical transmembrane segment spans residues 9–29; sequence ALVGWITGAAVAVLLLLLLLA. The disordered stretch occupies residues 86 to 115; sequence GLHHHHHPRHTPHHLHHHHHPHRHHPRHAR. Positions 87–115 are enriched in basic residues; that stretch reads LHHHHHPRHTPHHLHHHHHPHRHHPRHAR.

The protein resides in the membrane. In Homo sapiens (Human), this protein is Histidine-rich carboxyl terminus protein 1 (HRCT1).